The following is a 338-amino-acid chain: Lipoate-protein ligase A (338 aa).

The BPL/LPL catalytic domain maps to 29 to 216 (PATQRVLFLW…AFFAHYGERV (188 aa)). Residues Arg-71, 76-79 (GAVF), and Lys-134 each bind ATP. Lys-134 is a binding site for (R)-lipoate.

The protein belongs to the LplA family. As to quaternary structure, monomer.

It is found in the cytoplasm. The catalysed reaction is L-lysyl-[lipoyl-carrier protein] + (R)-lipoate + ATP = N(6)-[(R)-lipoyl]-L-lysyl-[lipoyl-carrier protein] + AMP + diphosphate + H(+). It functions in the pathway protein modification; protein lipoylation via exogenous pathway; protein N(6)-(lipoyl)lysine from lipoate: step 1/2. It participates in protein modification; protein lipoylation via exogenous pathway; protein N(6)-(lipoyl)lysine from lipoate: step 2/2. Its function is as follows. Catalyzes both the ATP-dependent activation of exogenously supplied lipoate to lipoyl-AMP and the transfer of the activated lipoyl onto the lipoyl domains of lipoate-dependent enzymes. This is Lipoate-protein ligase A from Escherichia coli O139:H28 (strain E24377A / ETEC).